The sequence spans 483 residues: Glutamate--tRNA ligase (483 aa).

Positions 14 to 24 (PSPTGDPHVGT) match the 'HIGH' region motif. Residues 253 to 257 (KISKR) carry the 'KMSKS' region motif. Residue K256 coordinates ATP.

It belongs to the class-I aminoacyl-tRNA synthetase family. Glutamate--tRNA ligase type 1 subfamily. As to quaternary structure, monomer.

It is found in the cytoplasm. It catalyses the reaction tRNA(Glu) + L-glutamate + ATP = L-glutamyl-tRNA(Glu) + AMP + diphosphate. Functionally, catalyzes the attachment of glutamate to tRNA(Glu) in a two-step reaction: glutamate is first activated by ATP to form Glu-AMP and then transferred to the acceptor end of tRNA(Glu). The sequence is that of Glutamate--tRNA ligase from Deinococcus radiodurans (strain ATCC 13939 / DSM 20539 / JCM 16871 / CCUG 27074 / LMG 4051 / NBRC 15346 / NCIMB 9279 / VKM B-1422 / R1).